Here is a 259-residue protein sequence, read N- to C-terminus: MAPAEARGALPGWISVLGWGLALCSLCGAGPLWSGSHEWKKLILTQHWPPTVCKEVNSCQDSLDYWTIHGLWPDRAEDCNQSWHFNLDEIKDLLRDMKIYWPDVIHRSSNRSQFWKHEWVKHGTCAAQVDALNSEKKYFGKSLDLYKQIDLNSVLQKFGIKPSINYYQLADFKDALTRIYGVVPKIQCLMPEQGESVQTVGQIELCFTKEDLHLRNCTEPGEQLSSRQEAWLAMEASTHGMMVCEDGPIFYPPPTKTQH.

The N-terminal stretch at 1-29 (MAPAEARGALPGWISVLGWGLALCSLCGA) is a signal peptide. A disulfide bond links Cys-53 and Cys-59. His-69 is an active-site residue. Disulfide bonds link Cys-79–Cys-125, Cys-188–Cys-244, and Cys-206–Cys-217. Residues Asn-80 and Asn-110 are each glycosylated (N-linked (GlcNAc...) asparagine). Residues Glu-118 and His-122 contribute to the active site. The N-linked (GlcNAc...) asparagine glycan is linked to Asn-216.

This sequence belongs to the RNase T2 family.

It localises to the secreted. The protein resides in the lysosome lumen. The protein localises to the endoplasmic reticulum lumen. It is found in the mitochondrion intermembrane space. It carries out the reaction a ribonucleotidyl-ribonucleotide-RNA + H2O = a 3'-end 3'-phospho-ribonucleotide-RNA + a 5'-end dephospho-ribonucleoside-RNA + H(+). It catalyses the reaction an adenylyl-uridine-RNA = a 3'-end 2',3'-cyclophospho-AMP-RNA + a 5'-end dephospho-uridine-RNA. The catalysed reaction is a guanylyl-uridine-RNA = a 3'-end 2',3'-cyclophospho-GMP-RNA + a 5'-end dephospho-uridine-RNA. Its activity is regulated as follows. Inhibited by Zn(2+) and Cu(2+). Its function is as follows. Ribonuclease that plays an essential role in innate immune response by recognizing and degrading RNAs from microbial pathogens that are subsequently sensed by TLR8. Cleaves preferentially single-stranded RNA molecules between purine and uridine residues, which critically contributes to the supply of catabolic uridine and the generation of purine-2',3'-cyclophosphate-terminated oligoribonucleotides. In turn, RNase T2 degradation products promote the RNA-dependent activation of TLR8. In plasmacytoid dendritic cells, it cooperates with PLD3 or PLD4 5'-&gt;3' exonucleases to process RNA fragments and release 2',3'-cyclic guanosine monophosphate (2',3'-cGMP), a potent stimulatory ligand for TLR7. Also plays a key role in degradation of mitochondrial RNA and processing of non-coding RNA imported from the cytosol into mitochondria. Participates as well in degradation of mitochondrion-associated cytosolic rRNAs. The protein is Ribonuclease T2-B of Mus musculus (Mouse).